Consider the following 2214-residue polypeptide: Sortilin-related receptor (2214 aa).

An N-terminal signal peptide occupies residues 1-28; that stretch reads MATRSSRRESRLPFLFTLVALLPPGALC. Residues 29–81 constitute a propeptide, removed in mature form; sequence EVWTQRLHGGSAPLPQDRGFLVVQGDPRELRLWARGDARGASRADEKPLRRKR. Residues 63–65 carry the Cell attachment site motif; sequence RGD. Over 82–2137 the chain is Lumenal; that stretch reads SAALQPEPIK…TQAARSTDVA (2056 aa). A glycan (N-linked (GlcNAc...) asparagine) is linked at N99. S114 carries the phosphoserine modification. A BNR 1 repeat occupies 136–147; it reads YVSYDYGKSFKK. N158 is a glycosylation site (N-linked (GlcNAc...) asparagine). A BNR 2 repeat occupies 232–243; sequence WKSDDFGQTWIM. N-linked (GlcNAc...) asparagine glycosylation is found at N368 and N430. 3 BNR repeats span residues 441 to 452, 521 to 532, and 562 to 573; these read VITFDKGGTWEF, YISSSAGARWRE, and KYSTNEGETWKT. 4 N-linked (GlcNAc...) asparagine glycosylation sites follow: N616, N674, N818, and N871. 5 LDL-receptor class B repeats span residues 800–843, 844–887, 888–932, 933–970, and 971–1013; these read NCLY…EPLS, QLLY…VPQE, GVMF…DDQW, IYWTDAYLECIERITFSGQQRSVILDNLPHPYAIAVFK, and NEIY…FYKG. The region spanning 1026-1072 is the EGF-like domain; sequence CSLLCLPKANNSRSCRCPEDVSSSVLPSGDLMCDCPQGYQLKNNTCV. N-linked (GlcNAc...) asparagine glycans are attached at residues N1035 and N1068. LDL-receptor class A domains lie at 1076 to 1114, 1115 to 1155, 1156 to 1194, 1198 to 1236, 1238 to 1272, 1273 to 1317, 1323 to 1361, 1366 to 1405, and 1417 to 1455; these read NTCLRNQYRCSNGNCINSIWWCDFDNDCGDMSDERNCPT, TICD…HCEM, HQCRSDEYNCSSGMCIRSSWVCDGDNDCRDWSDEANCTA, TCEASNFQCRNGHCIPQRWACDGDTDCQDGSDEDPVNCE, KCNGFRCPNGTCIPSSKHCDGLRDCSDGSDEQHCE, PLCT…GCSQ, KVCDEFGFQCQNGVCISLIWKCDGMDDCGDYSDEANCEN, PNCSRYFQFRCENGHCIPNRWKCDRENDCGDWSDEKDCGD, and STCLPNYYRCSSGTCVMDTWVCDGYRDCADGSDEEACPL. 21 cysteine pairs are disulfide-bonded: C1078-C1090, C1085-C1103, C1097-C1112, C1117-C1131, C1125-C1144, C1138-C1153, C1158-C1170, C1165-C1183, C1177-C1192, C1199-C1211, C1206-C1224, C1218-C1235, C1239-C1249, C1244-C1262, C1256-C1271, C1275-C1289, C1283-C1302, C1296-C1315, C1325-C1337, C1332-C1350, and C1344-C1359. The N-linked (GlcNAc...) asparagine glycan is linked to N1164. The N-linked (GlcNAc...) asparagine glycan is linked to N1191. The N-linked (GlcNAc...) asparagine glycan is linked to N1246. N-linked (GlcNAc...) asparagine glycosylation is present at N1367. Cystine bridges form between C1368–C1381, C1376–C1394, C1388–C1403, C1419–C1431, C1426–C1444, and C1438–C1453. The N-linked (GlcNAc...) asparagine glycan is linked to N1458. 2 LDL-receptor class A domains span residues 1469–1508 and 1512–1551; these read GRCDRFEFECHQPKTCIPNWKRCDGHQDCQDGRDEANCPT and LTCMSREFQCEDGEACIVLSERCDGFLDCSDESDEKACSD. 6 cysteine pairs are disulfide-bonded: C1471–C1484, C1478–C1497, C1491–C1506, C1514–C1527, C1521–C1540, and C1534–C1549. 6 consecutive Fibronectin type-III domains span residues 1557–1649, 1653–1745, 1749–1844, 1843–1927, 1934–2029, and 2030–2118; these read KVQN…TPEG, APRN…TIKG, PPPD…VRPP, PPAP…VVKM, PPRH…APDA, and LKII…LYDE. N1608, N1706, N1733, N1809, N1854, N1894, N1986, N2010, N2054, N2069, N2076, and N2092 each carry an N-linked (GlcNAc...) asparagine glycan. The helical transmembrane segment at 2138–2158 threads the bilayer; it reads AVVVPILFLILLSLGVGFAIL. Residues 2159-2214 are Cytoplasmic-facing; that stretch reads YTKHRRLQSSFTAFANSHYSSRLGSAIFSSGDDLGEDDEDAPMITGFSDDVPMVIA. The short motif at 2161–2164 is the Potential nuclear localization signal for the C-terminal fragment generated by PSEN1 element; it reads KHRR. Residues 2172 to 2177 carry the Endocytosis signal motif; that stretch reads FANSHY. The segment at 2190–2214 is required for efficient Golgi apparatus - endosome sorting; that stretch reads DDLGEDDEDAPMITGFSDDVPMVIA. The tract at residues 2201-2214 is required for interaction with GGA1 and GGA2; that stretch reads MITGFSDDVPMVIA. S2206 is modified (phosphoserine; by ROCK2). A DXXLL motif involved in the interaction with GGA1 motif is present at residues 2208-2212; that stretch reads DVPMV.

Belongs to the VPS10-related sortilin family. SORL1 subfamily. In terms of assembly, after maturation cleavage, interacts (via N-terminus) with its own propeptide; this interaction prevents interaction with other ligands, including CRLF1, GDNF, GFRA1, IL6 and IL6R. Interacts (via N-terminal ectodomain) with APP, forming a 1:1 stoichiometric complex, including with isoforms APP695, APP751 and APP770; this interaction retains APP in the trans-Golgi network and reduces processing into soluble APP-alpha and amyloid-beta peptides. Also interacts with APP C-terminal fragment C99 and with Abeta40. Interacts with beta-secretase BACE1/BACE; this interaction may affect BACE1-binding to APP and hence reduce BACE1-dependent APP cleavage. Interacts with LRPAP1/RAP. Interacts (via C-terminal cytosolic domain) with GGA1 and GGA2 (via N-terminal VHS domain). Interacts with PACS1. May interact (via the N-terminal ectodomain) with the morphogenetic neuropeptide, also called head activator or HA; this interaction is impaired in the presence of propeptide. Interacts with neurotensin/NTS. Interacts (via the N-terminal ectodomain) with PDGFB homodimer. Interacts (via N-terminal ectodomain) with the uPA receptor PLAUR; this interaction decreases PLAUR internalization. Interacts (via N-terminal ectodomain) with uPA/PLAU and PAI1/SERPINE1, either individually or in complex with each other, leading to endocytosis; this interaction is abolished in the presence of LRPAP1. Also interacts with the ternary complex composed of PLAUR-PLAU-PAI1. Also interacts with tPA/PLAT either alone or in complex with SERPINE1. Interacts (via C-terminus) with AP-1 and AP-2 complexes. Interacts with BMPR1A and BMPR1B. Interacts with lipoprotein lipase LPL; this interaction is optimal in slightly acidic conditions. Interacts (via N-terminal ectodomain) with GDNF (via propeptide) and GDNF receptor alpha-1/GFRA1, either individually or in complex with each other. The interaction with GDNF occurs mostly intracellularly. Also interacts with other GDNF receptor alpha family members, including GFRA2, GFRA3 and GFRA4. Interacts with the insulin receptor INSR; this interaction strongly increases the surface exposure of INSR. Interacts (via cytosolic C-terminus) with STK39/SPAK. Interacts (via N-terminal ectodomain) with the heterodimeric complex CRLF1-CLC; within this complex, the interaction is mediated predominantly by the CRLF1 moiety. Interacts with CNTFR, as well as with the tripartite signaling complex formed by CRLF1, CLC and CNTFR. Interacts (via N-terminal ectodomain) with IL6; this interaction leads to IL6 internalization and lysosomal degradation. Binding of SOLRL1 secreted N-terminal ectodomain to IL6 may increase IL6 trans signaling. Interacts with secreted IL6R; this interaction leads to IL6R internalization. Also interacts with transmembrane IL6R; this interaction does not affect IL6R subcellular location. Interacts with APOE. Interacts with apolipoprotein E-rich beta-VLDL. Interacts with APOA5; this interaction leads to APOA5 internalization and is abolished by heparin. Interaction with APOA5 results in enhanced binding to chylomicrons. Interacts with ROCK2. Interacts (via cytosolic C-terminus) with PPP3CB/calcineurin A beta. Interacts with NTRK2/TRKB; this interaction facilitates NTRK2 trafficking between synaptic plasma membranes, postsynaptic densities and cell soma, hence positively regulates BDNF signaling. Interacts (via cytosolic C-terminus) with HSPA12A in an ADP-dependent manner; this interaction affects SORL1 internalization and subcellular localization. Interacts (via N-terminal ectodomain) with ERBB2/HER2. Post-translationally, within the Golgi apparatus, the propeptide may be cleaved off by FURIN or a furin-like protease. After cleavage, the propeptide interacts with the mature protein N-terminus, preventing the association with other ligands. At the cell surface, partially subjected to proteolytic shedding that releases the ectodomain in the extracellular milieu. The shedding may be catalyzed by ADAM17/TACE. Following shedding, PSEN1/presenilin-1 cleaves the remaining transmembrane fragment and catalyzes the release of a C-terminal fragment in the cytosol and of a soluble N-terminal beta fragment in the extracellular milieu. The C-terminal cytosolic fragment localizes to the nucleus. In terms of processing, phosphorylation at Ser-2206 facilitates the interaction with GGA1. As to expression, highly expressed in brain (at protein level). Most abundant in the cerebellum, cerebral cortex and occipital pole; low levels in the putamen and thalamus. Expression is significantly reduced in the frontal cortex of patients suffering from Alzheimer disease. Also expressed in spinal cord, spleen, testis, prostate, ovary, thyroid and lymph nodes.

It is found in the golgi apparatus membrane. Its subcellular location is the golgi apparatus. The protein localises to the trans-Golgi network membrane. It localises to the endosome membrane. The protein resides in the early endosome membrane. It is found in the recycling endosome membrane. Its subcellular location is the endoplasmic reticulum membrane. The protein localises to the endosome. It localises to the multivesicular body membrane. The protein resides in the cell membrane. It is found in the cytoplasmic vesicle. Its subcellular location is the secretory vesicle membrane. The protein localises to the secreted. Its function is as follows. Sorting receptor that directs several proteins to their correct location within the cell. Along with AP-1 complex, involved Golgi apparatus - endosome sorting. Sorting receptor for APP, regulating its intracellular trafficking and processing into amyloidogenic-beta peptides. Retains APP in the trans-Golgi network, hence preventing its transit through late endosomes where amyloid beta peptides Abeta40 and Abeta42 are generated. May also sort newly produced amyloid-beta peptides to lysosomes for catabolism. Does not affect APP trafficking from the endoplasmic reticulum to Golgi compartments. Sorting receptor for the BDNF receptor NTRK2/TRKB that facilitates NTRK2 trafficking between synaptic plasma membranes, postsynaptic densities and cell soma, hence positively regulates BDNF signaling by controlling the intracellular location of its receptor. Sorting receptor for GDNF that promotes GDNF regulated, but not constitutive secretion. Sorting receptor for the GDNF-GFRA1 complex, directing it from the cell surface to endosomes. GDNF is then targeted to lysosomes and degraded, while its receptor GFRA1 recycles back to the cell membrane, resulting in a GDNF clearance pathway. The SORL1-GFRA1 complex further targets RET for endocytosis, but not for degradation, affecting GDNF-induced neurotrophic activities. Sorting receptor for ERBB2/HER2. Regulates ERBB2 subcellular distribution by promoting its recycling after internalization from endosomes back to the plasma membrane, hence stimulating phosphoinositide 3-kinase (PI3K)-dependent ERBB2 signaling. In ERBB2-dependent cancer cells, promotes cell proliferation. Sorting receptor for lipoprotein lipase LPL. Promotes LPL localization to endosomes and later to the lysosomes, leading to degradation of newly synthesized LPL. Potential sorting receptor for APOA5, inducing APOA5 internalization to early endosomes, then to late endosomes, wherefrom a portion is sent to lysosomes and degradation, another portion is sorted to the trans-Golgi network. Sorting receptor for the insulin receptor INSR. Promotes recycling of internalized INSR via the Golgi apparatus back to the cell surface, thereby preventing lysosomal INSR catabolism, increasing INSR cell surface expression and strengthening insulin signal reception in adipose tissue. Does not affect INSR internalization. Plays a role in renal ion homeostasis, controlling the phospho-regulation of SLC12A1/NKCC2 by STK39/SPAK kinase and PPP3CB/calcineurin A beta phosphatase, possibly through intracellular sorting of STK39 and PPP3CB. Stimulates, via the N-terminal ectodomain, the proliferation and migration of smooth muscle cells, possibly by increasing cell surface expression of the urokinase receptor uPAR/PLAUR. This may promote extracellular matrix proteolysis and hence facilitate cell migration. By acting on the migration of intimal smooth muscle cells, may accelerate intimal thickening following vascular injury. Promotes adhesion of monocytes. Stimulates proliferation and migration of monocytes/macrophages. Through its action on intimal smooth muscle cells and macrophages, may accelerate intimal thickening and macrophage foam cell formation in the process of atherosclerosis. Regulates hypoxia-enhanced adhesion of hematopoietic stem and progenitor cells to the bone marrow stromal cells via a PLAUR-mediated pathway. This function is mediated by the N-terminal ectodomain. Metabolic regulator, which functions to maintain the adequate balance between lipid storage and oxidation in response to changing environmental conditions, such as temperature and diet. The N-terminal ectodomain negatively regulates adipose tissue energy expenditure, acting through the inhibition the BMP/Smad pathway. May regulate signaling by the heterodimeric neurotrophic cytokine CLCF1-CRLF1 bound to the CNTFR receptor by promoting the endocytosis of the tripartite complex CLCF1-CRLF1-CNTFR and lysosomal degradation. May regulate IL6 signaling, decreasing cis signaling, possibly by interfering with IL6-binding to membrane-bound IL6R, while up-regulating trans signaling via soluble IL6R. This chain is Sortilin-related receptor (SORL1), found in Homo sapiens (Human).